Consider the following 151-residue polypeptide: Deoxyuridine 5'-triphosphate nucleotidohydrolase (151 aa).

Residues 70–72 (RSG), N83, 87–89 (LID), and M97 each bind substrate.

The protein belongs to the dUTPase family. Mg(2+) serves as cofactor.

It catalyses the reaction dUTP + H2O = dUMP + diphosphate + H(+). The protein operates within pyrimidine metabolism; dUMP biosynthesis; dUMP from dCTP (dUTP route): step 2/2. Its function is as follows. This enzyme is involved in nucleotide metabolism: it produces dUMP, the immediate precursor of thymidine nucleotides and it decreases the intracellular concentration of dUTP so that uracil cannot be incorporated into DNA. This is Deoxyuridine 5'-triphosphate nucleotidohydrolase from Pseudomonas putida (strain ATCC 700007 / DSM 6899 / JCM 31910 / BCRC 17059 / LMG 24140 / F1).